Here is a 227-residue protein sequence, read N- to C-terminus: Uracil-DNA glycosylase (227 aa).

The active-site Proton acceptor is the D65.

It belongs to the uracil-DNA glycosylase (UDG) superfamily. UNG family.

Its subcellular location is the cytoplasm. It catalyses the reaction Hydrolyzes single-stranded DNA or mismatched double-stranded DNA and polynucleotides, releasing free uracil.. In terms of biological role, excises uracil residues from the DNA which can arise as a result of misincorporation of dUMP residues by DNA polymerase or due to deamination of cytosine. The chain is Uracil-DNA glycosylase from Lactobacillus delbrueckii subsp. bulgaricus (strain ATCC 11842 / DSM 20081 / BCRC 10696 / JCM 1002 / NBRC 13953 / NCIMB 11778 / NCTC 12712 / WDCM 00102 / Lb 14).